A 594-amino-acid polypeptide reads, in one-letter code: MLPAQKHTLETLLENSVKQVVQASKGDADAAFVLPAIALERPKVAAHGDVACNVALQLAKPLGANPRQLAERIVAALTAQPAAAGLVDAAEIAGPGFINLRLTPASKQAVIGAVFAQGRAFGASEREHGKRVLLEFVSANPTGPLHVGHGRQAALGDALANVLASQGYAVHREFYYNDAGVQIGNLAISTQARARGLKPGDAGWPEAAYNGEYIADIARDYLNGETVAASDGEPVTGKRDADDLEAIRKFAVAYLRREQDMDLKAFGVKFDQYYLESSLYTEGRVEKTVDALIAAGMTYEQEGALWLRTTDEGDDKDRVMRKTDGTYTYFVPDVAYHVTKWERGFTKVINIQGSDHHGTIARVRAGLQGLHIGIPKGYPDYVLHKMVTVMRDGQEVKISKRAGSYVTVRDLIEWSGGATPGSEVSPELLDEATITRGRDAVRFFLISRKADTEFVFDIDLALKQNDENPVYYVQYAHARICSVLNEWKSRYGATDALLPGADLSPLDSKQAMALMQKLAEYPDVLAHAANELAPHAVAFYLRELASEFHSFYNAERVLVDEEAPRTARIALLAATRQVLENGLAMLGVSAPSKM.

The 'HIGH' region motif lies at 139–149; that stretch reads ANPTGPLHVGH.

The protein belongs to the class-I aminoacyl-tRNA synthetase family. As to quaternary structure, monomer.

The protein resides in the cytoplasm. The catalysed reaction is tRNA(Arg) + L-arginine + ATP = L-arginyl-tRNA(Arg) + AMP + diphosphate. The polypeptide is Arginine--tRNA ligase (Burkholderia thailandensis (strain ATCC 700388 / DSM 13276 / CCUG 48851 / CIP 106301 / E264)).